Here is a 275-residue protein sequence, read N- to C-terminus: NH(3)-dependent NAD(+) synthetase (275 aa).

50–57 (GISGGVDS) serves as a coordination point for ATP. A Mg(2+)-binding site is contributed by Asp56. A deamido-NAD(+)-binding site is contributed by Arg147. An ATP-binding site is contributed by Thr167. Mg(2+) is bound at residue Glu172. Residues Lys180 and Asp187 each contribute to the deamido-NAD(+) site. ATP contacts are provided by Lys196 and Thr218. 267-268 (HK) serves as a coordination point for deamido-NAD(+).

It belongs to the NAD synthetase family. In terms of assembly, homodimer.

It catalyses the reaction deamido-NAD(+) + NH4(+) + ATP = AMP + diphosphate + NAD(+) + H(+). It participates in cofactor biosynthesis; NAD(+) biosynthesis; NAD(+) from deamido-NAD(+) (ammonia route): step 1/1. Catalyzes the ATP-dependent amidation of deamido-NAD to form NAD. Uses ammonia as a nitrogen source. This chain is NH(3)-dependent NAD(+) synthetase, found in Pseudomonas syringae pv. tomato (strain ATCC BAA-871 / DC3000).